Consider the following 147-residue polypeptide: Ribonuclease 4 (147 aa).

The first 28 residues, 1-28 (MALQRTQAFLLLLLLTLLGLGLVQPSYG), serve as a signal peptide directing secretion. Residue glutamine 29 is modified to Pyrrolidone carboxylic acid. Residues arginine 35, histidine 40, lysine 68, asparagine 71, and threonine 72 each coordinate dUMP. Residue histidine 40 is the Proton acceptor of the active site. Cystine bridges form between cysteine 53–cysteine 109, cysteine 67–cysteine 120, cysteine 85–cysteine 135, and cysteine 92–cysteine 99. The active-site Proton donor is histidine 144. Position 145 (phenylalanine 145) interacts with dUMP.

The protein belongs to the pancreatic ribonuclease family.

Its subcellular location is the secreted. In terms of biological role, cleaves preferentially after uridine bases. Has antimicrobial activity against uropathogenic E.coli (UPEC). Probably contributes to urinary tract sterility. The polypeptide is Ribonuclease 4 (RNASE4) (Bos taurus (Bovine)).